The primary structure comprises 314 residues: Transcription factor TCP20 (314 aa).

2 disordered regions span residues 1 to 91 (MDPK…RGRR) and 295 to 314 (NHEE…GSGR). 2 stretches are compositionally biased toward basic and acidic residues: residues 38–49 (DENRKPTTEIKD) and 77–89 (SNKD…EGRG). Positions 78–132 (NKDRHTKVEGRGRRIRMPALCAARIFQLTRELGHKSDGETIQWLLQQAEPSIIAA) constitute a TCP domain.

Interacts with PURA1. Interacts with SPL.

The protein localises to the nucleus. Transcription factor that binds to the site II motif (3'-TGGGCC/T-5') in the promoter of PCNA-2 and to 3'-GCCCG/A-5' elements in the promoters of cyclin CYCB1-1 and ribosomal protein genes. The polypeptide is Transcription factor TCP20 (TCP20) (Arabidopsis thaliana (Mouse-ear cress)).